The following is a 1044-amino-acid chain: DEMETER-like protein 3 (1044 aa).

Residues 1-15 (MLTDGSQHTYQNGET) are compositionally biased toward polar residues. A disordered region spans residues 1 to 107 (MLTDGSQHTY…KPRNPATTRL (107 aa)). The span at 16–30 (KNSKEHERKCDESAH) shows a compositional bias: basic and acidic residues. A compositionally biased stretch (basic residues) spans 38–53 (THKKKEKKNSKEKHGI). The span at 54 to 66 (KHSESEHLQDDIS) shows a compositional bias: basic and acidic residues. The span at 71 to 89 (GKGRRRNSKGTPKKLRFNR) shows a compositional bias: basic residues. The tract at residues 348–445 (KVNLDPETIK…AFMSVAAKFP (98 aa)) is DEMETER. The [4Fe-4S] cluster site is built by C678, C685, C688, and C694. Residues 1024–1044 (VRRLHTPPDERGPKFMSDDDI) are disordered.

The protein belongs to the DNA glycosylase family. DEMETER subfamily. Requires [4Fe-4S] cluster as cofactor.

Its subcellular location is the nucleus. Its function is as follows. Potential transcriptional activator that may act by nicking the target promoter. Catalyzes the release of 5-methylcytosine (5-meC) from DNA by a glycosylase/lyase mechanism. The sequence is that of DEMETER-like protein 3 (DML3) from Arabidopsis thaliana (Mouse-ear cress).